Here is an 855-residue protein sequence, read N- to C-terminus: MGDEKLSRHTSLKRARSLSESIKGLFKPSGISGSNNAAAPSSRPGQDQAHSHQTARIITSNVSSPSISPVHSPVLQAAPKHHKLGVPNIAKLSLSPSREPSLNSENEMFSQESFISEKDEDEANLLEREDLQNKKEEKARAKHVRSKEAYVPHHRYTGGSDEVERQPRERLKNFPQNAGSSNPANSNANHVLDQENNFSIDAMLDYDEESKLRRRNSLGVRNHSNRTRSRKNSLSTPRSPPMKNGNDGMNSNATNNVGNGTGNRIYMRGRNQSDSISASSLPKFQEIECKCILDLGHFKVFENGYHEHSLRVLPIITNNKNVDSGDEKDADASVNSGDDGDNDSEANMHKQKSVFSLSGLFKSHKDGNQQQQQQQQQEENGEQINLEKAFSIIPSQRFIKSQTVKKSRTSNLKNGNNDELMKNDGKNIPQIVNPNAAVGAEELKLINALSEKIRKGLKSENTKGNNGEGRSNSNKQEDSDDTEGKAGTTNDDTSHKPCSQKYGKYIGVVGAGAYGVVKICARCKTAKDVLPYSTYSNGKKLFFAVKELKPKPGDQIDKFCTRLTSEFIIGHSLSHPHFEANAMIAGNVSRTTPPKHVFNAPNILKILDLMEYSNSFVEVMEFCASGDLYSLLTRNNISNESNNGSSRLIQTVKEGSGSPLHPLEADCFMKQLLNGVQYMHDHGIAHCDLKPENILFQPNGLLKICDFGTSSVFQTAWEKHVHFQSGAMGSEPYVAPEEFIRDAEYDPRLVDCWSCGIVYCTMVMGQYLWKIAIPEKDSLFKSFLSEIKDDGQFYLFEELRHVSSELNRLRKIALYRTFQVDPTKRITIEQLLQSSWMRKTKCCVVYRPLHTKVSK.

2 disordered regions span residues 1–166 and 214–261; these read MGDE…VERQ and RRNS…GNGT. A phosphoserine mark is found at Ser-17 and Ser-19. The span at 31 to 45 shows a compositional bias: polar residues; sequence ISGSNNAAAPSSRPG. Positions 57 to 74 are enriched in low complexity; that stretch reads IITSNVSSPSISPVHSPV. Residues Ser-68 and Ser-72 each carry the phosphoserine modification. Over residues 94–114 the composition is skewed to polar residues; sequence LSPSREPSLNSENEMFSQESF. Positions 125–139 are enriched in basic and acidic residues; it reads LLEREDLQNKKEEKA. A Phosphoserine modification is found at Ser-160. Over residues 248–258 the composition is skewed to low complexity; sequence GMNSNATNNVG. Phosphoserine occurs at positions 273, 277, 324, 333, 336, 358, 391, and 395. Residues 319 to 347 form a disordered region; sequence NKNVDSGDEKDADASVNSGDDGDNDSEAN. 2 disordered regions span residues 401 to 427 and 457 to 497; these read SQTV…DGKN and LKSE…SHKP. A compositionally biased stretch (polar residues) spans 462-474; it reads TKGNNGEGRSNSN. In terms of domain architecture, Protein kinase spans 503–837; that stretch reads GKYIGVVGAG…IEQLLQSSWM (335 aa). Residues 509–517 and Lys-546 each bind ATP; that span reads VGAGAYGVV. Asp-688 (proton acceptor) is an active-site residue.

It belongs to the protein kinase superfamily. CAMK Ser/Thr protein kinase family. NPR/HAL subfamily. HAL5 sub-subfamily.

The catalysed reaction is L-seryl-[protein] + ATP = O-phospho-L-seryl-[protein] + ADP + H(+). The enzyme catalyses L-threonyl-[protein] + ATP = O-phospho-L-threonyl-[protein] + ADP + H(+). Functionally, protein kinase involved in salt tolerance and pH sensitivity, probably by regulating plasma membrane potential and cation influx. Positively controls the TRK1-TRK2 potassium transport system in response to potassium starvation. Stabilizes TRK1 in the plasma membrane by preventing its vacuolar sorting and degradation. Also stabilizes other plasma membrane nutrient transporters like CAN1, FUR4 and HXT1. May itself be subject to regulation by ARL1. The chain is Serine/threonine-protein kinase HAL5 (HAL5) from Saccharomyces cerevisiae (strain YJM789) (Baker's yeast).